We begin with the raw amino-acid sequence, 427 residues long: Histidine--tRNA ligase (427 aa).

Belongs to the class-II aminoacyl-tRNA synthetase family. As to quaternary structure, homodimer.

It localises to the cytoplasm. The enzyme catalyses tRNA(His) + L-histidine + ATP = L-histidyl-tRNA(His) + AMP + diphosphate + H(+). This is Histidine--tRNA ligase (hisS) from Mycobacterium leprae (strain TN).